The chain runs to 634 residues: Probable potassium transport system protein Kup (634 aa).

12 consecutive transmembrane segments (helical) span residues 19–39 (AIGL…TSPL), 62–82 (VLSL…VIFV), 113–133 (FVVV…MITP), 150–170 (GLEH…FLIQ), 177–197 (IGIL…ALGV), 225–245 (IGVA…ALYA), 259–279 (WFLL…ATIL), 291–311 (LLAP…ATVI), 349–369 (IYIG…VLGF), 379–399 (YGVA…VVIW), 406–426 (LWLG…FFAA), and 431–451 (VIQG…LMST).

Belongs to the HAK/KUP transporter (TC 2.A.72) family.

The protein localises to the cell inner membrane. The enzyme catalyses K(+)(in) + H(+)(in) = K(+)(out) + H(+)(out). In terms of biological role, transport of potassium into the cell. Likely operates as a K(+):H(+) symporter. In Pseudomonas aeruginosa (strain LESB58), this protein is Probable potassium transport system protein Kup.